The sequence spans 165 residues: 6,7-dimethyl-8-ribityllumazine synthase (165 aa).

5-amino-6-(D-ribitylamino)uracil-binding positions include Phe24, 62-64, and 86-88; these read AFE and AVI. 91 to 92 provides a ligand contact to (2S)-2-hydroxy-3-oxobutyl phosphate; it reads DT. His94 functions as the Proton donor in the catalytic mechanism. Phe119 provides a ligand contact to 5-amino-6-(D-ribitylamino)uracil. Residue Arg133 participates in (2S)-2-hydroxy-3-oxobutyl phosphate binding.

This sequence belongs to the DMRL synthase family.

It catalyses the reaction (2S)-2-hydroxy-3-oxobutyl phosphate + 5-amino-6-(D-ribitylamino)uracil = 6,7-dimethyl-8-(1-D-ribityl)lumazine + phosphate + 2 H2O + H(+). The protein operates within cofactor biosynthesis; riboflavin biosynthesis; riboflavin from 2-hydroxy-3-oxobutyl phosphate and 5-amino-6-(D-ribitylamino)uracil: step 1/2. In terms of biological role, catalyzes the formation of 6,7-dimethyl-8-ribityllumazine by condensation of 5-amino-6-(D-ribitylamino)uracil with 3,4-dihydroxy-2-butanone 4-phosphate. This is the penultimate step in the biosynthesis of riboflavin. The polypeptide is 6,7-dimethyl-8-ribityllumazine synthase (Prochlorococcus marinus (strain MIT 9313)).